Consider the following 236-residue polypeptide: MKLEIINSQIEAGQKGLQIFKQAIQQGAQVFGLATGSTPISIYDAITQSDLDFTKFISINLDEYKGLANNHPESYHYFMNKYFFSKKPFAHSYMPNGLADDLKSETKHYDQIIEENPIDLQILGIGRNGHIGFNEPGTSFNSQTHIVNLTDNTIQANSRFFDSIDQVPKQAVSMGIASIMKSKEILIAAYGKEKAQAVKEFIEGPVTEDVPASILQKHPKVTVILDQAAAALLSKK.

The active-site Proton acceptor; for enolization step is the Asp-62. Asn-128 (for ring-opening step) is an active-site residue. His-130 (proton acceptor; for ring-opening step) is an active-site residue. Residue Glu-135 is the For ring-opening step of the active site.

It belongs to the glucosamine/galactosamine-6-phosphate isomerase family. NagB subfamily.

The catalysed reaction is alpha-D-glucosamine 6-phosphate + H2O = beta-D-fructose 6-phosphate + NH4(+). Its pathway is amino-sugar metabolism; N-acetylneuraminate degradation; D-fructose 6-phosphate from N-acetylneuraminate: step 5/5. Catalyzes the reversible isomerization-deamination of glucosamine 6-phosphate (GlcN6P) to form fructose 6-phosphate (Fru6P) and ammonium ion. The polypeptide is Glucosamine-6-phosphate deaminase (Oenococcus oeni (strain ATCC BAA-331 / PSU-1)).